The sequence spans 497 residues: uncharacterized protein (497 aa).

A disordered region spans residues 58–79; sequence ISTRSFRNDGNDSDPQTLDPDA. A run of 12 helical transmembrane segments spans residues 86-106, 120-140, 155-175, 180-200, 222-242, 258-278, 309-329, 348-368, 378-398, 407-427, 438-458, and 468-488; these read IAFV…ALPI, FSGL…YPML, FRPL…YSLA, WLYL…MFLY, LNIL…GLLA, VGSW…SIFF, FMLV…AGYQ, GNFL…STFL, MLYG…LDVL, FVLY…LISL, ILVG…GAIC, and VGFI…LLFL.

The protein belongs to the major facilitator superfamily.

The protein resides in the membrane. This is an uncharacterized protein from Schizosaccharomyces pombe (strain 972 / ATCC 24843) (Fission yeast).